The following is a 186-amino-acid chain: Shikimate kinase (186 aa).

An ATP-binding site is contributed by 15-20 (GAGKTT). T19 serves as a coordination point for Mg(2+). 3 residues coordinate substrate: D37, R61, and G83. ATP is bound at residue R121. R140 provides a ligand contact to substrate.

It belongs to the shikimate kinase family. Monomer. It depends on Mg(2+) as a cofactor.

It is found in the cytoplasm. It catalyses the reaction shikimate + ATP = 3-phosphoshikimate + ADP + H(+). It functions in the pathway metabolic intermediate biosynthesis; chorismate biosynthesis; chorismate from D-erythrose 4-phosphate and phosphoenolpyruvate: step 5/7. Catalyzes the specific phosphorylation of the 3-hydroxyl group of shikimic acid using ATP as a cosubstrate. The protein is Shikimate kinase of Psychrobacter cryohalolentis (strain ATCC BAA-1226 / DSM 17306 / VKM B-2378 / K5).